We begin with the raw amino-acid sequence, 459 residues long: Cysteine--tRNA ligase (459 aa).

Residue Cys28 coordinates Zn(2+). The 'HIGH' region signature appears at 30–40 (ITVYDLCHVGH). 3 residues coordinate Zn(2+): Cys209, His234, and Glu238. The short motif at 266 to 270 (KMSKS) is the 'KMSKS' region element. Lys269 contacts ATP.

It belongs to the class-I aminoacyl-tRNA synthetase family. Monomer. The cofactor is Zn(2+).

Its subcellular location is the cytoplasm. It catalyses the reaction tRNA(Cys) + L-cysteine + ATP = L-cysteinyl-tRNA(Cys) + AMP + diphosphate. The chain is Cysteine--tRNA ligase (cysS) from Pasteurella multocida (strain Pm70).